A 214-amino-acid chain; its full sequence is Protein-L-isoaspartate O-methyltransferase (214 aa).

S61 is a catalytic residue.

The protein belongs to the methyltransferase superfamily. L-isoaspartyl/D-aspartyl protein methyltransferase family.

It is found in the cytoplasm. It carries out the reaction [protein]-L-isoaspartate + S-adenosyl-L-methionine = [protein]-L-isoaspartate alpha-methyl ester + S-adenosyl-L-homocysteine. Its function is as follows. Catalyzes the methyl esterification of L-isoaspartyl residues in peptides and proteins that result from spontaneous decomposition of normal L-aspartyl and L-asparaginyl residues. It plays a role in the repair and/or degradation of damaged proteins. This is Protein-L-isoaspartate O-methyltransferase from Paramagnetospirillum magneticum (strain ATCC 700264 / AMB-1) (Magnetospirillum magneticum).